The chain runs to 146 residues: Lipoprotein signal peptidase (146 aa).

The next 3 helical transmembrane spans lie at Ile-6–Leu-26, Met-50–Leu-70, and Tyr-82–Ala-104. Active-site residues include Asp-108 and Asp-125. The chain crosses the membrane as a helical span at residues Phe-123–Pro-143.

The protein belongs to the peptidase A8 family.

The protein resides in the cell inner membrane. It carries out the reaction Release of signal peptides from bacterial membrane prolipoproteins. Hydrolyzes -Xaa-Yaa-Zaa-|-(S,diacylglyceryl)Cys-, in which Xaa is hydrophobic (preferably Leu), and Yaa (Ala or Ser) and Zaa (Gly or Ala) have small, neutral side chains.. The protein operates within protein modification; lipoprotein biosynthesis (signal peptide cleavage). In terms of biological role, this protein specifically catalyzes the removal of signal peptides from prolipoproteins. This is Lipoprotein signal peptidase from Sulfurovum sp. (strain NBC37-1).